The sequence spans 225 residues: NAD(P)H-quinone oxidoreductase subunit K, chloroplastic (225 aa).

[4Fe-4S] cluster contacts are provided by cysteine 43, cysteine 44, cysteine 108, and cysteine 139.

This sequence belongs to the complex I 20 kDa subunit family. In terms of assembly, NDH is composed of at least 16 different subunits, 5 of which are encoded in the nucleus. [4Fe-4S] cluster serves as cofactor.

The protein localises to the plastid. Its subcellular location is the chloroplast thylakoid membrane. It catalyses the reaction a plastoquinone + NADH + (n+1) H(+)(in) = a plastoquinol + NAD(+) + n H(+)(out). The catalysed reaction is a plastoquinone + NADPH + (n+1) H(+)(in) = a plastoquinol + NADP(+) + n H(+)(out). In terms of biological role, NDH shuttles electrons from NAD(P)H:plastoquinone, via FMN and iron-sulfur (Fe-S) centers, to quinones in the photosynthetic chain and possibly in a chloroplast respiratory chain. The immediate electron acceptor for the enzyme in this species is believed to be plastoquinone. Couples the redox reaction to proton translocation, and thus conserves the redox energy in a proton gradient. The chain is NAD(P)H-quinone oxidoreductase subunit K, chloroplastic from Lolium perenne (Perennial ryegrass).